A 478-amino-acid polypeptide reads, in one-letter code: MLCTIIRGPSFLEARNQLLRSLKKCRCFEMRADLLTVSDAELQKLILLAPISVLTWKKPPSCTPQAWVKKIQSLAKLHPTYLDLDKDFPEEEILHIRHLHPNIKIIRSLHTSEHTDITQLYTQMLASSIDYYKLAVSPASTTDLLNICRQKHSLPQNTTVLCLGKIGQSSRILSPILQNPFTYTIPTGADPVAPGQLSLNHHYFYNFTNLSPQSQICALIGDTSRSIGHLTHNPFFSQLSIPCPYVKLPLTPQELPEFFSSIRALPFLGISVTSPLKTAIIPFLDKQDSSVKLSGSCNTLVIRQGEIIGYDTDGEGLFSVLTQHNMDLSNQRVAILGAGGAARSIAARLSRTGCELLIFNRTKIHAEAIASRYQAQAFDIKDLPLHSVSLIINCLPPSSIIPQALAPLIVDINTLPKHNSFTQYARLKGCSIIYGHEMFAQQALLQFRLWFPTHSFNHLEKNFSRRAAVLASLFSIAA.

Positions 1-208 are 3-dehydroquinate dehydratase; that stretch reads MLCTIIRGPS…LNHHYFYNFT (208 aa). 3-dehydroquinate contacts are provided by residues Ser-21, 29-31, and 55-57; these read EMR and TWK. The active-site Proton donor/acceptor; for 3-dehydroquinate dehydratase activity is His-110. Residue Lys-133 is the Schiff-base intermediate with substrate; for 3-dehydroquinate dehydratase activity of the active site. 3-dehydroquinate is bound by residues Arg-171 and Gln-196. The shikimate 5-dehydrogenase stretch occupies residues 209 to 478; sequence NLSPQSQICA…VLASLFSIAA (270 aa). 226–228 contacts shikimate; sequence SIG. The active-site Proton acceptor; for shikimate dehydrogenase activity is Lys-277. The shikimate site is built by Asn-298 and Asp-313. NADP(+)-binding positions include 337–341, 360–362, and Gly-435; these read GAGGA and NRT. Residue Gln-442 coordinates shikimate.

This sequence in the N-terminal section; belongs to the type-I 3-dehydroquinase family. It in the C-terminal section; belongs to the shikimate dehydrogenase family.

It carries out the reaction 3-dehydroquinate = 3-dehydroshikimate + H2O. The catalysed reaction is shikimate + NADP(+) = 3-dehydroshikimate + NADPH + H(+). It functions in the pathway metabolic intermediate biosynthesis; chorismate biosynthesis; chorismate from D-erythrose 4-phosphate and phosphoenolpyruvate: step 3/7. The protein operates within metabolic intermediate biosynthesis; chorismate biosynthesis; chorismate from D-erythrose 4-phosphate and phosphoenolpyruvate: step 4/7. Its function is as follows. Bifunctional enzyme that catalyzes two sequential steps of the aromatic amino acids biosynthetic pathway. In the first reaction, the AroD domain catalyzes the cis-dehydration of 3-dehydroquinate (DHQ) and introduces the first double bond of the aromatic ring to yield 3-dehydroshikimate; in the second reaction, the AroE domain catalyzes the reversible NADPH linked reduction of 3-dehydroshikimate (DHSA) to yield shikimate (SA). In Chlamydia muridarum (strain MoPn / Nigg), this protein is Shikimate biosynthesis protein AroDE.